Reading from the N-terminus, the 181-residue chain is ATP synthase subunit delta (181 aa).

It belongs to the ATPase delta chain family. F-type ATPases have 2 components, F(1) - the catalytic core - and F(0) - the membrane proton channel. F(1) has five subunits: alpha(3), beta(3), gamma(1), delta(1), epsilon(1). F(0) has three main subunits: a(1), b(2) and c(10-14). The alpha and beta chains form an alternating ring which encloses part of the gamma chain. F(1) is attached to F(0) by a central stalk formed by the gamma and epsilon chains, while a peripheral stalk is formed by the delta and b chains.

The protein resides in the cell inner membrane. Functionally, f(1)F(0) ATP synthase produces ATP from ADP in the presence of a proton or sodium gradient. F-type ATPases consist of two structural domains, F(1) containing the extramembraneous catalytic core and F(0) containing the membrane proton channel, linked together by a central stalk and a peripheral stalk. During catalysis, ATP synthesis in the catalytic domain of F(1) is coupled via a rotary mechanism of the central stalk subunits to proton translocation. This protein is part of the stalk that links CF(0) to CF(1). It either transmits conformational changes from CF(0) to CF(1) or is implicated in proton conduction. The sequence is that of ATP synthase subunit delta from Orientia tsutsugamushi (strain Boryong) (Rickettsia tsutsugamushi).